Here is a 146-residue protein sequence, read N- to C-terminus: Putative calcium-binding protein CML19 (146 aa).

EF-hand domains are found at residues 3–38 (AATAEFRRVFSAFDRDADGKISAAELRLCMKAALGE), 40–75 (MSAEEAEALVSSADTDDDGLLDEEEFTKLAVQLEMG), 79–114 (ERCRGLMEAFRMYEMEGEGRITPASLKRMLSKLGSH), and 115–146 (QGIEECQTMICRFDLDGDGVISFEEFKIMMDA). Positions 16, 18, 20, 22, 27, 53, 55, 57, and 64 each coordinate Ca(2+). Residues Asp-128, Asp-130, Asp-132, and Glu-139 each coordinate Ca(2+).

Potential calcium sensor. The protein is Putative calcium-binding protein CML19 (CML19) of Oryza sativa subsp. japonica (Rice).